The primary structure comprises 180 residues: GTP cyclohydrolase 1 (180 aa).

Cysteine 71, histidine 74, and cysteine 142 together coordinate Zn(2+).

Belongs to the GTP cyclohydrolase I family. As to quaternary structure, homomer.

It catalyses the reaction GTP + H2O = 7,8-dihydroneopterin 3'-triphosphate + formate + H(+). The protein operates within cofactor biosynthesis; 7,8-dihydroneopterin triphosphate biosynthesis; 7,8-dihydroneopterin triphosphate from GTP: step 1/1. The protein is GTP cyclohydrolase 1 of Helicobacter pylori (strain P12).